A 517-amino-acid chain; its full sequence is Golgi-associated kinase 1B (517 aa).

At 1 to 36 (MTCPDKPGQLVNWFVCSLCAPRVCKLWSSRRPRTRR) the chain is on the cytoplasmic side. Residues 37 to 56 (NLLLGTACAIYLGFLVSQVG) form a helical; Signal-anchor for type II membrane protein membrane-spanning segment. The Extracellular segment spans residues 57–517 (RGSFQHGQAT…HGARVLPMNE (461 aa)). N98 and N287 each carry an N-linked (GlcNAc...) asparagine glycan.

This sequence belongs to the GASK family.

The protein localises to the golgi apparatus membrane. The chain is Golgi-associated kinase 1B from Mus musculus (Mouse).